A 660-amino-acid polypeptide reads, in one-letter code: DNA mismatch repair protein MutL (660 aa).

It belongs to the DNA mismatch repair MutL/HexB family.

This protein is involved in the repair of mismatches in DNA. It is required for dam-dependent methyl-directed DNA mismatch repair. May act as a 'molecular matchmaker', a protein that promotes the formation of a stable complex between two or more DNA-binding proteins in an ATP-dependent manner without itself being part of a final effector complex. The protein is DNA mismatch repair protein MutL of Streptococcus equi subsp. zooepidemicus (strain MGCS10565).